A 250-amino-acid polypeptide reads, in one-letter code: Short-chain dehydrogenase RED3 (250 aa).

Residues I16, S35, E63, and N91 each coordinate NADP(+). Active-site proton donor residues include S145 and Y164. Residues Y164, K168, V195, and S197 each contribute to the NADP(+) site. Catalysis depends on K168, which acts as the Lowers pKa of active site Tyr.

The protein belongs to the short-chain dehydrogenases/reductases (SDR) family.

The protein operates within polyketide biosynthesis. Functionally, short-chain dehydrogenase; part of the gene cluster that mediates the biosynthesis of pyriculol and pyriculariol, two heptaketides that induce lesion formation upon application on rice leaves but are dispensable for pathogenicity. The highly reducing polyketide synthase synthesizes the heptaketide backbone of pyriculol and pyriculariol. Pyriculol and pyriculariol contain several hydroxyl moieties and double bonds, so it can be assumed that several reduction steps occur during biosynthesis. These reactions could be executed by PKS19 itself or partly by the tailoring enzymes OXR1, OXR2, RED1, RED2 or RED3, identified within the cluster. The FAD-linked oxidoreductase OXR1 is the only tailoring enzyme for which the function has been determined yet, and is involved in the oxidation of dihydropyriculol and dihydropyriculariol into pyriculol and pyriculariol, respectively. The chain is Short-chain dehydrogenase RED3 from Pyricularia oryzae (strain 70-15 / ATCC MYA-4617 / FGSC 8958) (Rice blast fungus).